A 176-amino-acid chain; its full sequence is Probable fimbrial subunit LpfE (176 aa).

The signal sequence occupies residues 1–23 (MKFKRLLHSGIASLSLVACGVNA).

This sequence belongs to the fimbrial protein family.

The protein resides in the fimbrium. Its function is as follows. Part of the lpfABCC'DE fimbrial operon. LP fimbriae may participate in the interaction with eukaryotic cells by assisting in microcolony formation. The polypeptide is Probable fimbrial subunit LpfE (lpfE) (Escherichia coli O157:H7).